The sequence spans 203 residues: CASP-like protein 2U6 (203 aa).

At 1-31 (MSEHRIPVAADKKISPPISAGEQKGCKGLKR) the chain is on the cytoplasmic side. The helical transmembrane segment at 32–52 (TDLMLRFAAFVCCTVTMVVLI) threads the bilayer. The Extracellular portion of the chain corresponds to 53–84 (TDKQTSAIQVPGFNNLTITKTVSFDLAKAFVY). A glycan (N-linked (GlcNAc...) asparagine) is linked at Asn67. Residues 85-105 (LVSAAGIGAGYTLLVLVLSII) form a helical membrane-spanning segment. Topologically, residues 106 to 111 (SAERSK) are cytoplasmic. A helical membrane pass occupies residues 112–132 (AIAWFIFVFDQLITYVLLAAA). At 133–164 (AASTEVAYMGAHAPPEASWLKVCSLFGRFCHQ) the chain is on the extracellular side. Residues 165 to 185 (LGASLVTSLISTVLFAFSAAI) traverse the membrane as a helical segment. The Cytoplasmic portion of the chain corresponds to 186–203 (SAYYLFSNTNVRPAYSKG).

This sequence belongs to the Casparian strip membrane proteins (CASP) family. In terms of assembly, homodimer and heterodimers.

The protein localises to the cell membrane. In Selaginella moellendorffii (Spikemoss), this protein is CASP-like protein 2U6.